The chain runs to 314 residues: Phospho-N-acetylmuramoyl-pentapeptide-transferase (314 aa).

10 helical membrane passes run 4–24 (LIFYITLITFIFLLFLYPIFI), 52–72 (TMGGILFILAIFFLSLLTYFI), 77–97 (LFLIIGVASLLFGFIGFLDDY), 111–131 (IQKLLLQFLFSIVIVYLISIF), 146–166 (LDLKFFYPLWGIIYLTGMSNA), 169–189 (LTDGIDGLSGGIYVISALFTA), 191–211 (IAGINFNHIPLLILPVIAYLF), 219–239 (IFMGDTGSLALGGILGSLALY), 242–262 (VELFTILTCFIFISEMFSVII), and 294–314 (IVLIFWTINILTGIVALGGVL).

It belongs to the glycosyltransferase 4 family. MraY subfamily. Requires Mg(2+) as cofactor.

Its subcellular location is the cell inner membrane. It carries out the reaction UDP-N-acetyl-alpha-D-muramoyl-L-alanyl-gamma-D-glutamyl-meso-2,6-diaminopimeloyl-D-alanyl-D-alanine + di-trans,octa-cis-undecaprenyl phosphate = di-trans,octa-cis-undecaprenyl diphospho-N-acetyl-alpha-D-muramoyl-L-alanyl-D-glutamyl-meso-2,6-diaminopimeloyl-D-alanyl-D-alanine + UMP. The protein operates within cell wall biogenesis; peptidoglycan biosynthesis. In terms of biological role, catalyzes the initial step of the lipid cycle reactions in the biosynthesis of the cell wall peptidoglycan: transfers peptidoglycan precursor phospho-MurNAc-pentapeptide from UDP-MurNAc-pentapeptide onto the lipid carrier undecaprenyl phosphate, yielding undecaprenyl-pyrophosphoryl-MurNAc-pentapeptide, known as lipid I. The chain is Phospho-N-acetylmuramoyl-pentapeptide-transferase from Petrotoga mobilis (strain DSM 10674 / SJ95).